Consider the following 77-residue polypeptide: MARVCQVTGKGPMVGNNVSHANNKTKRRFMPNLQYRRFWVESENRWVRLRITSAGLRLIDKKGIDAILVDLRARGEI.

Belongs to the bacterial ribosomal protein bL28 family.

This Polaromonas sp. (strain JS666 / ATCC BAA-500) protein is Large ribosomal subunit protein bL28.